The sequence spans 446 residues: Histidine--tRNA ligase (446 aa).

Belongs to the class-II aminoacyl-tRNA synthetase family. In terms of assembly, homodimer.

It localises to the cytoplasm. It carries out the reaction tRNA(His) + L-histidine + ATP = L-histidyl-tRNA(His) + AMP + diphosphate + H(+). The sequence is that of Histidine--tRNA ligase from Paraburkholderia phymatum (strain DSM 17167 / CIP 108236 / LMG 21445 / STM815) (Burkholderia phymatum).